Reading from the N-terminus, the 706-residue chain is Polyribonucleotide nucleotidyltransferase (706 aa).

Mg(2+)-binding residues include Asp-486 and Asp-492. A KH domain is found at 553–612 (PRIHTIKISTDKIKDVIGKGGSVIRALTEETGTTIEIEDDGTVRIASTDGEKAKHAIRRI). In terms of domain architecture, S1 motif spans 622–690 (GRVYQGKVTR…RQGRVRLSIK (69 aa)).

The protein belongs to the polyribonucleotide nucleotidyltransferase family. In terms of assembly, component of the RNA degradosome, which is a multiprotein complex involved in RNA processing and mRNA degradation. The cofactor is Mg(2+).

Its subcellular location is the cytoplasm. The enzyme catalyses RNA(n+1) + phosphate = RNA(n) + a ribonucleoside 5'-diphosphate. Involved in mRNA degradation. Catalyzes the phosphorolysis of single-stranded polyribonucleotides processively in the 3'- to 5'-direction. The protein is Polyribonucleotide nucleotidyltransferase of Pectobacterium atrosepticum (strain SCRI 1043 / ATCC BAA-672) (Erwinia carotovora subsp. atroseptica).